Reading from the N-terminus, the 401-residue chain is Alkane 1-monooxygenase (401 aa).

Over 1-20 (MLEKHRVLDSAPEYVDKKKY) the chain is Cytoplasmic. Residues 21-39 (LWILSTLWPATPMIGIWLA) traverse the membrane as a helical segment. At 40 to 41 (NE) the chain is on the periplasmic side. The helical transmembrane segment at 42–62 (TGWGIFYGLVLLVWYGALPLL) threads the bilayer. Topologically, residues 63–88 (DAMFGEDFNNPPEEVVPKLEKERYYR) are cytoplasmic. A helical membrane pass occupies residues 89-111 (VLTYLTVPMHYAALIVSAWWVGT). Over 112–113 (QP) the chain is Periplasmic. Residues 114-134 (MSWLEIGALALSLGIVNGLAL) traverse the membrane as a helical segment. At 135 to 228 (NTGHELGHKK…QSVWSFDNEI (94 aa)) the chain is on the cytoplasmic side. Positions 138, 142, 168, 172, and 173 each coordinate Fe cation. The helical transmembrane segment at 229–249 (LQPMIITVILYAVLLALFGPK) threads the bilayer. Position 250 (Met250) is a topological domain, periplasmic. Residues 251 to 270 (LVFLPIQMAFGWWQLTSANY) form a helical membrane-spanning segment. The Cytoplasmic segment spans residues 271–401 (IEHYGLLRQK…HSSSTSAVAS (131 aa)). Fe cation is bound by residues His312, His315, and His316.

This sequence belongs to the fatty acid desaturase type 1 family. AlkB subfamily. Fe(3+) serves as cofactor.

It is found in the cell inner membrane. It carries out the reaction octane + 2 reduced [rubredoxin] + O2 + 2 H(+) = 2 oxidized [rubredoxin] + octan-1-ol + H2O. Its pathway is hydrocarbon metabolism; alkane degradation. In terms of biological role, catalyzes the hydroxylation of n-alkanes and fatty acids in the presence of a NADH-rubredoxin reductase and rubredoxin. The chain is Alkane 1-monooxygenase (alkB) from Ectopseudomonas oleovorans (Pseudomonas oleovorans).